Consider the following 355-residue polypeptide: Guanine nucleotide-binding protein G(i) subunit alpha-2 (355 aa).

Gly2 is lipidated: N-myristoyl glycine. Cys3 carries the S-palmitoyl cysteine lipid modification. Positions 32–355 constitute a G-alpha domain; the sequence is REVKLLLLGA…KNNLKDCGLF (324 aa). The G1 motif stretch occupies residues 35-48; sequence KLLLLGAGESGKST. GTP contacts are provided by residues 40–47, 176–182, 201–205, 270–273, and Ala327; these read GAGESGKS, LRTRVKT, DVGGQ, and NKKD. The Mg(2+) site is built by Ser47 and Thr182. Residues 174-182 are G2 motif; that stretch reads DVLRTRVKT. The tract at residues 197-206 is G3 motif; the sequence is FKMFDVGGQR. The tract at residues 266–273 is G4 motif; the sequence is ILFLNKKD. The tract at residues 325-330 is G5 motif; the sequence is TCATDT.

The protein belongs to the G-alpha family. G(i/o/t/z) subfamily. G proteins are composed of 3 units; alpha, beta and gamma. The alpha chain contains the guanine nucleotide binding site.

It is found in the cytoplasm. The protein resides in the cytoskeleton. The protein localises to the microtubule organizing center. Its subcellular location is the centrosome. It localises to the cell membrane. Its function is as follows. Guanine nucleotide-binding proteins (G proteins) are involved as modulators or transducers in various transmembrane signaling systems. The G(i) proteins are involved in hormonal regulation of adenylate cyclase: they inhibit the cyclase in response to beta-adrenergic stimuli. May play a role in cell division. The chain is Guanine nucleotide-binding protein G(i) subunit alpha-2 (gnai2) from Oryzias latipes (Japanese rice fish).